The chain runs to 237 residues: Ras-related protein RABA3 (237 aa).

35-42 (GDSAVGKT) contacts GTP. Positions 57 to 65 (SKSTIGVEF) match the Effector region motif. GTP contacts are provided by residues 83–87 (DTAGQ), 141–144 (NKAD), and 172–173 (SA). S-geranylgeranyl cysteine attachment occurs at residues Cys-235 and Cys-237. Cysteine methyl ester is present on Cys-237.

This sequence belongs to the small GTPase superfamily. Rab family. Expressed in root tips.

It localises to the endosome membrane. Its subcellular location is the golgi apparatus. The protein resides in the trans-Golgi network membrane. In terms of biological role, intracellular vesicle trafficking and protein transport. The protein is Ras-related protein RABA3 (RABA3) of Arabidopsis thaliana (Mouse-ear cress).